The sequence spans 167 residues: MPLLDSFKVDHTKMNAPAVRIAKTMRTPKGDNITVFDLRFCIPNKEILSPKGIHTLEHLFAGFMRDHLNGDSIEIIDISPMGCRTGFYMSLIGTPNEQEVSEAWLASMQDVLGVQDQASIPELNIYQCGSYTEHSLEDAHEIAKNVIARGIGVNKNEDLSLDNSLLK.

Residues histidine 54, histidine 58, and cysteine 128 each coordinate Fe cation.

The protein belongs to the LuxS family. As to quaternary structure, homodimer. Fe cation is required as a cofactor.

It carries out the reaction S-(5-deoxy-D-ribos-5-yl)-L-homocysteine = (S)-4,5-dihydroxypentane-2,3-dione + L-homocysteine. Functionally, involved in the synthesis of autoinducer 2 (AI-2) which is secreted by bacteria and is used to communicate both the cell density and the metabolic potential of the environment. The regulation of gene expression in response to changes in cell density is called quorum sensing. Catalyzes the transformation of S-ribosylhomocysteine (RHC) to homocysteine (HC) and 4,5-dihydroxy-2,3-pentadione (DPD). This chain is S-ribosylhomocysteine lyase, found in Haemophilus influenzae (strain PittEE).